The following is a 734-amino-acid chain: Photosystem I P700 chlorophyll a apoprotein A2 (734 aa).

Helical transmembrane passes span 46–69, 135–158, 175–199, 273–291, 330–353, 369–395, 417–439, and 517–535; these read IFAS…FHVA, LYIG…LHLQ, LNHH…HVAL, IAHH…GHMY, LHFQ…QHMY, AALY…IFFI, AIIS…LYVH, and FLVH…LILV. [4Fe-4S] cluster is bound by residues cysteine 559 and cysteine 568. The next 2 membrane-spanning stretches (helical) occupy residues 575–596 and 643–665; these read AFYL…YWHW and LSVW…MFLI. Chlorophyll a contacts are provided by histidine 654, methionine 662, and tyrosine 670. Position 671 (tryptophan 671) interacts with phylloquinone. The helical transmembrane segment at 707 to 727 threads the bilayer; sequence LVGLVHFSVGYIFTYAAFLIA.

The protein belongs to the PsaA/PsaB family. The PsaA/B heterodimer binds the P700 chlorophyll special pair and subsequent electron acceptors. PSI consists of a core antenna complex that captures photons, and an electron transfer chain that converts photonic excitation into a charge separation. The eukaryotic PSI reaction center is composed of at least 11 subunits. P700 is a chlorophyll a/chlorophyll a' dimer, A0 is one or more chlorophyll a, A1 is one or both phylloquinones and FX is a shared 4Fe-4S iron-sulfur center. serves as cofactor.

The protein localises to the plastid. Its subcellular location is the chloroplast thylakoid membrane. It carries out the reaction reduced [plastocyanin] + hnu + oxidized [2Fe-2S]-[ferredoxin] = oxidized [plastocyanin] + reduced [2Fe-2S]-[ferredoxin]. PsaA and PsaB bind P700, the primary electron donor of photosystem I (PSI), as well as the electron acceptors A0, A1 and FX. PSI is a plastocyanin-ferredoxin oxidoreductase, converting photonic excitation into a charge separation, which transfers an electron from the donor P700 chlorophyll pair to the spectroscopically characterized acceptors A0, A1, FX, FA and FB in turn. Oxidized P700 is reduced on the lumenal side of the thylakoid membrane by plastocyanin. This Gnetum parvifolium (Small-leaved jointfir) protein is Photosystem I P700 chlorophyll a apoprotein A2.